A 396-amino-acid polypeptide reads, in one-letter code: Probable sugar efflux transporter (396 aa).

A run of 12 helical transmembrane segments spans residues 15–35 (VVTL…PVGL), 50–70 (VGIM…PFML), 81–101 (LICL…AWNF), 103–123 (VLVI…SITA), 136–156 (AQAL…GLPI), 169–189 (TFFA…KLLP), 202–222 (LPLL…VVVV), 246–266 (FATV…LVFG), 275–295 (SLVS…LPAA), 301–321 (LAIL…GMQV), 333–353 (VAMA…ALVG), and 364–384 (AIGY…VLIF).

The protein belongs to the major facilitator superfamily. SotB (TC 2.A.1.2) family.

The protein localises to the cell inner membrane. Functionally, involved in the efflux of sugars. The physiological role may be the reduction of the intracellular concentration of toxic sugars or sugar metabolites. In Salmonella paratyphi A (strain ATCC 9150 / SARB42), this protein is Probable sugar efflux transporter.